The following is a 263-amino-acid chain: 3-deoxy-manno-octulosonate cytidylyltransferase (263 aa).

It belongs to the KdsB family.

The protein localises to the cytoplasm. It carries out the reaction 3-deoxy-alpha-D-manno-oct-2-ulosonate + CTP = CMP-3-deoxy-beta-D-manno-octulosonate + diphosphate. It participates in nucleotide-sugar biosynthesis; CMP-3-deoxy-D-manno-octulosonate biosynthesis; CMP-3-deoxy-D-manno-octulosonate from 3-deoxy-D-manno-octulosonate and CTP: step 1/1. The protein operates within bacterial outer membrane biogenesis; lipopolysaccharide biosynthesis. Activates KDO (a required 8-carbon sugar) for incorporation into bacterial lipopolysaccharide in Gram-negative bacteria. This chain is 3-deoxy-manno-octulosonate cytidylyltransferase, found in Burkholderia thailandensis (strain ATCC 700388 / DSM 13276 / CCUG 48851 / CIP 106301 / E264).